We begin with the raw amino-acid sequence, 287 residues long: Bifunctional protein FolD (287 aa).

NADP(+) contacts are provided by residues 160-162 (GRS), Ser-189, and Thr-230.

Belongs to the tetrahydrofolate dehydrogenase/cyclohydrolase family. In terms of assembly, homodimer.

The enzyme catalyses (6R)-5,10-methylene-5,6,7,8-tetrahydrofolate + NADP(+) = (6R)-5,10-methenyltetrahydrofolate + NADPH. It carries out the reaction (6R)-5,10-methenyltetrahydrofolate + H2O = (6R)-10-formyltetrahydrofolate + H(+). The protein operates within one-carbon metabolism; tetrahydrofolate interconversion. Its function is as follows. Catalyzes the oxidation of 5,10-methylenetetrahydrofolate to 5,10-methenyltetrahydrofolate and then the hydrolysis of 5,10-methenyltetrahydrofolate to 10-formyltetrahydrofolate. This is Bifunctional protein FolD from Chlamydia caviae (strain ATCC VR-813 / DSM 19441 / 03DC25 / GPIC) (Chlamydophila caviae).